A 217-amino-acid chain; its full sequence is Ribonuclease HII (217 aa).

Residues 27-216 form the RNase H type-2 domain; that stretch reads SRVAGVDEAG…VKESIQEGVC (190 aa). A divalent metal cation contacts are provided by D33, E34, and D126.

This sequence belongs to the RNase HII family. It depends on Mn(2+) as a cofactor. Mg(2+) serves as cofactor.

It is found in the cytoplasm. The enzyme catalyses Endonucleolytic cleavage to 5'-phosphomonoester.. In terms of biological role, endonuclease that specifically degrades the RNA of RNA-DNA hybrids. This chain is Ribonuclease HII, found in Chlamydia trachomatis serovar A (strain ATCC VR-571B / DSM 19440 / HAR-13).